Reading from the N-terminus, the 258-residue chain is Countin-1 (258 aa).

A signal peptide spans 1–21; it reads MNKLFSLILALFLVNSAVVSS. The region spanning 22–106 is the Saposin B-type domain; sequence LDSCSICVDF…EKISVCKTND (85 aa). 3 disulfide bridges follow: cysteine 25/cysteine 102, cysteine 28/cysteine 96, and cysteine 56/cysteine 69. N-linked (GlcNAc...) asparagine glycosylation is found at asparagine 121 and asparagine 215. Residues 233 to 248 are compositionally biased toward low complexity; that stretch reads AGSFSGSSQSTQTGAA. Residues 233-258 form a disordered region; sequence AGSFSGSSQSTQTGAASGSGSGFALF. Residues 249-258 are compositionally biased toward gly residues; the sequence is SGSGSGFALF.

This sequence belongs to the countin family. As to quaternary structure, component of the counting factor (CF) complex, which includes cf60, cf50, cf45-1 and ctnA.

Its subcellular location is the secreted. Functionally, cell-counting factor that limits the maximum size of the multicellular structure. May down-regulate the expression of gp24, which mediates cell adhesion. In Dictyostelium discoideum (Social amoeba), this protein is Countin-1 (ctnA).